The sequence spans 379 residues: Homoserine O-succinyltransferase (379 aa).

An AB hydrolase-1 domain is found at 51 to 360; it reads NAVLICHALS…DAPQGHDAFL (310 aa). S157 (nucleophile) is an active-site residue. R227 contacts substrate. Catalysis depends on residues D323 and H356. D357 lines the substrate pocket.

It belongs to the AB hydrolase superfamily. MetX family. In terms of assembly, homodimer.

The protein resides in the cytoplasm. It carries out the reaction L-homoserine + succinyl-CoA = O-succinyl-L-homoserine + CoA. It functions in the pathway amino-acid biosynthesis; L-methionine biosynthesis via de novo pathway; O-succinyl-L-homoserine from L-homoserine: step 1/1. With respect to regulation, requires MetW for activity. Functionally, transfers a succinyl group from succinyl-CoA to L-homoserine, forming succinyl-L-homoserine. The protein is Homoserine O-succinyltransferase of Pseudomonas syringae pv. syringae (strain B728a).